Consider the following 400-residue polypeptide: Subtilisin-like protease 7 (400 aa).

An N-terminal signal peptide occupies residues 1 to 20; sequence MGFITKAIPLALAAASVING. Positions 21 to 119 are excised as a propeptide; that stretch reads AEIMETRAGV…IERDARVQIN (99 aa). The 83-residue stretch at 36-118 folds into the Inhibitor I9 domain; that stretch reads KYIVVMNDGM…YIERDARVQI (83 aa). Asn58 carries N-linked (GlcNAc...) asparagine glycosylation. The Peptidase S8 domain occupies 129 to 400; the sequence is SWGLARVGSK…SKLINNGSGM (272 aa). Active-site charge relay system residues include Asp161 and His192. N-linked (GlcNAc...) asparagine glycosylation is found at Asn222 and Asn252. Residue Ser346 is the Charge relay system of the active site. Asn396 is a glycosylation site (N-linked (GlcNAc...) asparagine).

Belongs to the peptidase S8 family.

The protein localises to the secreted. Its function is as follows. Secreted subtilisin-like serine protease with keratinolytic activity that contributes to pathogenicity. The protein is Subtilisin-like protease 7 (SUB7) of Trichophyton verrucosum (Cattle ringworm fungus).